The chain runs to 68 residues: Conotoxin reg3.14 (68 aa).

Positions 1–22 (MMSKLGVLLTICLLLFPLSVLP) are cleaved as a signal peptide. Residues 23 to 52 (LDGDQPADQPAERMQDISAEQNPWFDPVKR) constitute a propeptide that is removed on maturation. Disulfide bonds link cysteine 53-cysteine 68, cysteine 54-cysteine 64, and cysteine 59-cysteine 67.

It belongs to the conotoxin M superfamily. In terms of tissue distribution, expressed by the venom duct.

The protein localises to the secreted. The protein is Conotoxin reg3.14 of Conus regius (Crown cone).